The primary structure comprises 363 residues: Zinc phosphodiesterase ELAC protein 1 (363 aa).

Zn(2+) is bound by residues His62, His64, Asp66, His67, His182, Asp253, and His313. Asp66 (proton acceptor) is an active-site residue.

It belongs to the RNase Z family. In terms of assembly, homodimer. The cofactor is Zn(2+).

It is found in the cytoplasm. The protein resides in the cytosol. Its subcellular location is the nucleus. The enzyme catalyses Endonucleolytic cleavage of RNA, removing extra 3' nucleotides from tRNA precursor, generating 3' termini of tRNAs. A 3'-hydroxy group is left at the tRNA terminus and a 5'-phosphoryl group is left at the trailer molecule.. Its function is as follows. Zinc phosphodiesterase, which displays some tRNA 3'-processing endonuclease activity. Specifically involved in tRNA repair: acts downstream of the ribosome-associated quality control (RQC) pathway by removing a 2',3'-cyclic phosphate from tRNAs following cleavage by ANKZF1. tRNAs are then processed by TRNT1. This chain is Zinc phosphodiesterase ELAC protein 1 (ELAC1), found in Bos taurus (Bovine).